The primary structure comprises 388 residues: DNA replication and repair protein RecF (388 aa).

30-37 (GANGNGKT) contributes to the ATP binding site.

This sequence belongs to the RecF family.

The protein localises to the cytoplasm. Functionally, the RecF protein is involved in DNA metabolism; it is required for DNA replication and normal SOS inducibility. RecF binds preferentially to single-stranded, linear DNA. It also seems to bind ATP. This Nocardia farcinica (strain IFM 10152) protein is DNA replication and repair protein RecF.